The following is a 496-amino-acid chain: Lysine--tRNA ligase (496 aa).

Positions 408 and 415 each coordinate Mg(2+).

This sequence belongs to the class-II aminoacyl-tRNA synthetase family. In terms of assembly, homodimer. Mg(2+) serves as cofactor.

It localises to the cytoplasm. It catalyses the reaction tRNA(Lys) + L-lysine + ATP = L-lysyl-tRNA(Lys) + AMP + diphosphate. The protein is Lysine--tRNA ligase of Legionella pneumophila (strain Corby).